The chain runs to 241 residues: DNA repair protein RecO (241 aa).

It belongs to the RecO family.

Involved in DNA repair and RecF pathway recombination. This chain is DNA repair protein RecO, found in Rickettsia bellii (strain OSU 85-389).